The following is a 424-amino-acid chain: D-inositol 3-phosphate glycosyltransferase (424 aa).

H21 lines the 1D-myo-inositol 3-phosphate pocket. UDP-N-acetyl-alpha-D-glucosamine-binding positions include 27–28 (QP) and G35. 1D-myo-inositol 3-phosphate is bound by residues 32-37 (DAGGMN), K90, Y123, T147, and R167. 3 residues coordinate UDP-N-acetyl-alpha-D-glucosamine: R241, K246, and Q299. Positions 308, 309, and 311 each coordinate Mg(2+). Residues E321 and E329 each coordinate UDP-N-acetyl-alpha-D-glucosamine. T335 lines the Mg(2+) pocket.

This sequence belongs to the glycosyltransferase group 1 family. MshA subfamily. In terms of assembly, homodimer.

It carries out the reaction 1D-myo-inositol 3-phosphate + UDP-N-acetyl-alpha-D-glucosamine = 1D-myo-inositol 2-acetamido-2-deoxy-alpha-D-glucopyranoside 3-phosphate + UDP + H(+). In terms of biological role, catalyzes the transfer of a N-acetyl-glucosamine moiety to 1D-myo-inositol 3-phosphate to produce 1D-myo-inositol 2-acetamido-2-deoxy-glucopyranoside 3-phosphate in the mycothiol biosynthesis pathway. This chain is D-inositol 3-phosphate glycosyltransferase, found in Mycobacterium avium (strain 104).